A 294-amino-acid chain; its full sequence is UDP-3-O-acyl-N-acetylglucosamine deacetylase (294 aa).

Positions 75, 232, and 236 each coordinate Zn(2+). H259 serves as the catalytic Proton donor.

This sequence belongs to the LpxC family. Zn(2+) is required as a cofactor.

The enzyme catalyses a UDP-3-O-[(3R)-3-hydroxyacyl]-N-acetyl-alpha-D-glucosamine + H2O = a UDP-3-O-[(3R)-3-hydroxyacyl]-alpha-D-glucosamine + acetate. It participates in glycolipid biosynthesis; lipid IV(A) biosynthesis; lipid IV(A) from (3R)-3-hydroxytetradecanoyl-[acyl-carrier-protein] and UDP-N-acetyl-alpha-D-glucosamine: step 2/6. Catalyzes the hydrolysis of UDP-3-O-myristoyl-N-acetylglucosamine to form UDP-3-O-myristoylglucosamine and acetate, the committed step in lipid A biosynthesis. This chain is UDP-3-O-acyl-N-acetylglucosamine deacetylase, found in Campylobacter hominis (strain ATCC BAA-381 / DSM 21671 / CCUG 45161 / LMG 19568 / NCTC 13146 / CH001A).